A 308-amino-acid chain; its full sequence is Coenzyme PQQ synthesis protein B (308 aa).

This sequence belongs to the PqqB family.

Its pathway is cofactor biosynthesis; pyrroloquinoline quinone biosynthesis. Its function is as follows. May be involved in the transport of PQQ or its precursor to the periplasm. This Rhodopseudomonas palustris (strain TIE-1) protein is Coenzyme PQQ synthesis protein B.